The primary structure comprises 378 residues: Phosphoserine aminotransferase (378 aa).

Arg53 contributes to the L-glutamate binding site. The pyridoxal 5'-phosphate site is built by Trp117, Thr167, Asp190, and Gln213. An N6-(pyridoxal phosphate)lysine modification is found at Lys214. Pyridoxal 5'-phosphate is bound at residue 255–256 (NT).

It belongs to the class-V pyridoxal-phosphate-dependent aminotransferase family. SerC subfamily. As to quaternary structure, homodimer. It depends on pyridoxal 5'-phosphate as a cofactor.

Its subcellular location is the cytoplasm. It carries out the reaction O-phospho-L-serine + 2-oxoglutarate = 3-phosphooxypyruvate + L-glutamate. The enzyme catalyses 4-(phosphooxy)-L-threonine + 2-oxoglutarate = (R)-3-hydroxy-2-oxo-4-phosphooxybutanoate + L-glutamate. Its pathway is amino-acid biosynthesis; L-serine biosynthesis; L-serine from 3-phospho-D-glycerate: step 2/3. It functions in the pathway cofactor biosynthesis; pyridoxine 5'-phosphate biosynthesis; pyridoxine 5'-phosphate from D-erythrose 4-phosphate: step 3/5. Its function is as follows. Catalyzes the reversible conversion of 3-phosphohydroxypyruvate to phosphoserine and of 3-hydroxy-2-oxo-4-phosphonooxybutanoate to phosphohydroxythreonine. This is Phosphoserine aminotransferase from Ralstonia nicotianae (strain ATCC BAA-1114 / GMI1000) (Ralstonia solanacearum).